We begin with the raw amino-acid sequence, 163 residues long: Adenosine 5'-monophosphoramidase HINT2 (163 aa).

The transit peptide at 1–17 directs the protein to the mitochondrion; sequence MAAAVVLAAGLRAARRA. Positions 55–163 constitute an HIT domain; it reads IFSRILDKSL…GGRQLQWPPG (109 aa). AMP contacts are provided by serine 63 and aspartate 80. An N6-acetyllysine modification is found at lysine 119. Asparagine 136 is a binding site for AMP. Lysine 139 is modified (N6-acetyllysine). Residues 142–145 and 149–151 contribute to the AMP site; these read AQSV and HIH. Positions 147 to 151 match the Histidine triad motif motif; sequence HLHIH. The active-site Tele-AMP-histidine intermediate is histidine 149.

It belongs to the HINT family. High expression in liver and pancreas. Expression is significantly down-regulated in hepatocellular carcinoma (HCC) patients.

The protein resides in the mitochondrion. It catalyses the reaction adenosine 5'-phosphoramidate + H2O = AMP + NH4(+). Exhibits adenosine 5'-monophosphoramidase activity, hydrolyzing purine nucleotide phosphoramidates with a single phosphate group such as adenosine 5'monophosphoramidate (AMP-NH2) to yield AMP and NH2. Hydrolyzes adenosine 5'-O-p-nitrophenylphosphoramidate (AMP-pNA). Hydrolyzes fluorogenic purine nucleoside tryptamine phosphoramidates in vitro. May be involved in steroid biosynthesis. May play a role in apoptosis. The polypeptide is Adenosine 5'-monophosphoramidase HINT2 (Homo sapiens (Human)).